Consider the following 287-residue polypeptide: MTVKFSQVSYVYQKGTPFEHVALRDIETTFQQGKYYAVIGQTGSGKSTLIQHFNGLLKPSTGKLQIDDITITHKTKDKVLKQIRKRIGVVFQFPESQLFEDSVEREILFGPKNFNMPIDEVKARAYKLLIDFGFSRDILQQSPFQMSGGQMRKIAITSILAMDPDIVILDEPTAGLDPKSRDQIMKMIKKLQVEQNKTIILVTHEMNDVAKYVDEIKIMKQGQLVEECSPRKLFSDTNYVNQLHLDVPDVVKLQRDIEDKYQYYFNKIALTEDEFIDMYKEWQEDER.

An ABC transporter domain is found at 3–246 (VKFSQVSYVY…TNYVNQLHLD (244 aa)). 40-47 (GQTGSGKS) lines the ATP pocket.

This sequence belongs to the ABC transporter superfamily. Energy-coupling factor EcfA family. In terms of assembly, forms a stable energy-coupling factor (ECF) transporter complex composed of 2 membrane-embedded substrate-binding proteins (S component), 2 ATP-binding proteins (A component) and 2 transmembrane proteins (T component).

It localises to the cell membrane. Functionally, ATP-binding (A) component of a common energy-coupling factor (ECF) ABC-transporter complex. Unlike classic ABC transporters this ECF transporter provides the energy necessary to transport a number of different substrates. This chain is Energy-coupling factor transporter ATP-binding protein EcfA2, found in Staphylococcus saprophyticus subsp. saprophyticus (strain ATCC 15305 / DSM 20229 / NCIMB 8711 / NCTC 7292 / S-41).